Consider the following 278-residue polypeptide: Ribosomal RNA small subunit methyltransferase A (278 aa).

Residues Asn-28, Leu-30, Gly-55, Glu-77, Asp-103, and Asn-122 each coordinate S-adenosyl-L-methionine.

The protein belongs to the class I-like SAM-binding methyltransferase superfamily. rRNA adenine N(6)-methyltransferase family. RsmA subfamily.

It localises to the cytoplasm. The enzyme catalyses adenosine(1518)/adenosine(1519) in 16S rRNA + 4 S-adenosyl-L-methionine = N(6)-dimethyladenosine(1518)/N(6)-dimethyladenosine(1519) in 16S rRNA + 4 S-adenosyl-L-homocysteine + 4 H(+). Functionally, specifically dimethylates two adjacent adenosines (A1518 and A1519) in the loop of a conserved hairpin near the 3'-end of 16S rRNA in the 30S particle. May play a critical role in biogenesis of 30S subunits. This is Ribosomal RNA small subunit methyltransferase A from Cereibacter sphaeroides (strain ATCC 17025 / ATH 2.4.3) (Rhodobacter sphaeroides).